Reading from the N-terminus, the 417-residue chain is Tol-Pal system protein TolB (417 aa).

A signal peptide spans 1–16; the sequence is MRYLWLFLIGTIGLFA.

Belongs to the TolB family. In terms of assembly, the Tol-Pal system is composed of five core proteins: the inner membrane proteins TolA, TolQ and TolR, the periplasmic protein TolB and the outer membrane protein Pal. They form a network linking the inner and outer membranes and the peptidoglycan layer.

The protein localises to the periplasm. Functionally, part of the Tol-Pal system, which plays a role in outer membrane invagination during cell division and is important for maintaining outer membrane integrity. The protein is Tol-Pal system protein TolB of Helicobacter pylori (strain HPAG1).